The chain runs to 499 residues: Probable cytosol aminopeptidase (499 aa).

Mn(2+) contacts are provided by K269 and D274. Residue K281 is part of the active site. Mn(2+)-binding residues include D292, D351, and E353. R355 is an active-site residue.

Belongs to the peptidase M17 family. Mn(2+) serves as cofactor.

The protein localises to the cytoplasm. It carries out the reaction Release of an N-terminal amino acid, Xaa-|-Yaa-, in which Xaa is preferably Leu, but may be other amino acids including Pro although not Arg or Lys, and Yaa may be Pro. Amino acid amides and methyl esters are also readily hydrolyzed, but rates on arylamides are exceedingly low.. It catalyses the reaction Release of an N-terminal amino acid, preferentially leucine, but not glutamic or aspartic acids.. Presumably involved in the processing and regular turnover of intracellular proteins. Catalyzes the removal of unsubstituted N-terminal amino acids from various peptides. This is Probable cytosol aminopeptidase from Haemophilus ducreyi (strain 35000HP / ATCC 700724).